The following is a 225-amino-acid chain: 2-C-methyl-D-erythritol 4-phosphate cytidylyltransferase (225 aa).

The protein belongs to the IspD/TarI cytidylyltransferase family. IspD subfamily.

It carries out the reaction 2-C-methyl-D-erythritol 4-phosphate + CTP + H(+) = 4-CDP-2-C-methyl-D-erythritol + diphosphate. It functions in the pathway isoprenoid biosynthesis; isopentenyl diphosphate biosynthesis via DXP pathway; isopentenyl diphosphate from 1-deoxy-D-xylulose 5-phosphate: step 2/6. Catalyzes the formation of 4-diphosphocytidyl-2-C-methyl-D-erythritol from CTP and 2-C-methyl-D-erythritol 4-phosphate (MEP). The sequence is that of 2-C-methyl-D-erythritol 4-phosphate cytidylyltransferase from Chromobacterium violaceum (strain ATCC 12472 / DSM 30191 / JCM 1249 / CCUG 213 / NBRC 12614 / NCIMB 9131 / NCTC 9757 / MK).